A 445-amino-acid chain; its full sequence is Trigger factor (445 aa).

The region spanning glycine 164–proline 249 is the PPIase FKBP-type domain.

It belongs to the FKBP-type PPIase family. Tig subfamily.

Its subcellular location is the cytoplasm. The catalysed reaction is [protein]-peptidylproline (omega=180) = [protein]-peptidylproline (omega=0). Its function is as follows. Involved in protein export. Acts as a chaperone by maintaining the newly synthesized protein in an open conformation. Functions as a peptidyl-prolyl cis-trans isomerase. The chain is Trigger factor from Psychrobacter sp. (strain PRwf-1).